Reading from the N-terminus, the 395-residue chain is Putative nickel insertion protein (395 aa).

The protein belongs to the LarC family.

The protein is Putative nickel insertion protein of Methanopyrus kandleri (strain AV19 / DSM 6324 / JCM 9639 / NBRC 100938).